The following is a 203-amino-acid chain: MKVVAFERNLQGTGASRRLRNSGKAPGIVYGAGEPQLIELDHNALWHALKKEAFHSSILELEVAGKSQQVLLRDVQYHPFRQLVLHVDFQRVDAKKKLHTKVPLHFMNQETNPAVKLGGAIISHVINEIEIECLPAALPEFIEVDLAKIEAGQSLHATDIALPAGVALVAHLVAENPVIVSAPIPAGAQSEEAAAEGEKPAAE.

This sequence belongs to the bacterial ribosomal protein bL25 family. CTC subfamily. Part of the 50S ribosomal subunit; part of the 5S rRNA/L5/L18/L25 subcomplex. Contacts the 5S rRNA. Binds to the 5S rRNA independently of L5 and L18.

In terms of biological role, this is one of the proteins that binds to the 5S RNA in the ribosome where it forms part of the central protuberance. In Paraburkholderia phymatum (strain DSM 17167 / CIP 108236 / LMG 21445 / STM815) (Burkholderia phymatum), this protein is Large ribosomal subunit protein bL25.